A 266-amino-acid chain; its full sequence is Auxin-responsive protein IAA21 (266 aa).

An EAR-like (transcriptional repression) motif is present at residues 24–28; that stretch reads LRLGL. Residues 27–50 are disordered; it reads GLPGTAEEAESEGGGGGGTDAAPL. The region spanning 146-248 is the PB1 domain; sequence CLYVKVSMDG…SCRRLRIMKG (103 aa).

It belongs to the Aux/IAA family. As to quaternary structure, homodimers and heterodimers. Highly expressed in flowers. Expressed in roots and seedlings.

The protein resides in the nucleus. Functionally, aux/IAA proteins are short-lived transcriptional factors that function as repressors of early auxin response genes at low auxin concentrations. The chain is Auxin-responsive protein IAA21 (IAA21) from Oryza sativa subsp. japonica (Rice).